The sequence spans 95 residues: Aspartyl/glutamyl-tRNA(Asn/Gln) amidotransferase subunit C (95 aa).

It belongs to the GatC family. In terms of assembly, heterotrimer of A, B and C subunits.

It catalyses the reaction L-glutamyl-tRNA(Gln) + L-glutamine + ATP + H2O = L-glutaminyl-tRNA(Gln) + L-glutamate + ADP + phosphate + H(+). The catalysed reaction is L-aspartyl-tRNA(Asn) + L-glutamine + ATP + H2O = L-asparaginyl-tRNA(Asn) + L-glutamate + ADP + phosphate + 2 H(+). In terms of biological role, allows the formation of correctly charged Asn-tRNA(Asn) or Gln-tRNA(Gln) through the transamidation of misacylated Asp-tRNA(Asn) or Glu-tRNA(Gln) in organisms which lack either or both of asparaginyl-tRNA or glutaminyl-tRNA synthetases. The reaction takes place in the presence of glutamine and ATP through an activated phospho-Asp-tRNA(Asn) or phospho-Glu-tRNA(Gln). The protein is Aspartyl/glutamyl-tRNA(Asn/Gln) amidotransferase subunit C of Pelodictyon phaeoclathratiforme (strain DSM 5477 / BU-1).